The primary structure comprises 224 residues: MKPDVKICGLKTEEAVEKAVSLGATHVGFIFFEKSPRHIEPDIAGRIAEKARGRAKIVAVTVDADTDDLDDIVYLLKPDILQLHGHESPQQVLTIKALYGLPVMKVFSIREPADLLQIDAYIGIADRFLLDAKAPEGSDLPGGNGVTFDWRLLRDLDAEVDYMLSGGLNKDNVGQALAETAARGLDVSSGVESAPGVKDLERMDQFFAAVRLATATAPVSGSVQ.

It belongs to the TrpF family.

The catalysed reaction is N-(5-phospho-beta-D-ribosyl)anthranilate = 1-(2-carboxyphenylamino)-1-deoxy-D-ribulose 5-phosphate. It participates in amino-acid biosynthesis; L-tryptophan biosynthesis; L-tryptophan from chorismate: step 3/5. This Allorhizobium ampelinum (strain ATCC BAA-846 / DSM 112012 / S4) (Agrobacterium vitis (strain S4)) protein is N-(5'-phosphoribosyl)anthranilate isomerase.